A 30-amino-acid polypeptide reads, in one-letter code: GIPCGESCVFIPCITAAIGCSCKSKVCYRN.

A cross-link (cyclopeptide (Gly-Asn)) is located at residues 1–30 (GIPCGESCVFIPCITAAIGCSCKSKVCYRN). Cystine bridges form between C4–C20, C8–C22, and C13–C27.

Post-translationally, this is a cyclic peptide.

The protein localises to the secreted. In terms of biological role, probably participates in a plant defense mechanism. The chain is Cyclotide cter-P from Clitoria ternatea (Butterfly pea).